A 112-amino-acid polypeptide reads, in one-letter code: Citrate synthase (112 aa).

Residues His39 and Asp97 contribute to the active site.

Belongs to the citrate synthase family.

The enzyme catalyses oxaloacetate + acetyl-CoA + H2O = citrate + CoA + H(+). It participates in carbohydrate metabolism; tricarboxylic acid cycle; isocitrate from oxaloacetate: step 1/2. This Bartonella vinsonii subsp. berkhoffii protein is Citrate synthase (gltA).